The primary structure comprises 372 residues: Putative neuropeptide precursor protein (372 aa).

The N-terminal stretch at 1–17 is a signal peptide; it reads MLLFSLTAITAVLAVSA. Disordered regions lie at residues 18-89 and 136-208; these read VPTP…SNGE and VTKS…KRDS. Residues 19-31 are compositionally biased toward polar residues; sequence PTPSNNKDGSTIS. The segment covering 38 to 57 has biased composition (basic and acidic residues); that stretch reads DQTKDDNRSLFLNKSDKNDL. Residues 72 to 89 show a composition bias toward polar residues; the sequence is GYDQTVDQRFDSPQSNGE. A compositionally biased stretch (low complexity) spans 177-191; sequence GGAAASAKTATKNSG.

In terms of processing, may be proteolytically processed to give rise to a number of active peptides. In terms of tissue distribution, detected in the brain and frontal ganglion and in the axons connecting to the corpus cardiacum and corpus allatum (at protein level). Detected in the brain-subesophageal ganglion (brain-SG) complex, fat body, midgut and ovary. Expression in the brain-SG complex is 2-3 times higher than in the other tissues.

The protein resides in the cytoplasm. It localises to the secreted. The chain is Putative neuropeptide precursor protein from Bombyx mori (Silk moth).